Reading from the N-terminus, the 346-residue chain is Peripherin-2 (346 aa).

Topologically, residues 1 to 24 are cytoplasmic; it reads MALLKVKFDQKKRVKLAQGLWLMN. A helical transmembrane segment spans residues 25–43; the sequence is WLSVLAGIVIFSLGLFLKI. The Lumenal segment spans residues 44–61; the sequence is ELRKRSDVMNNSESHFVP. A glycan (N-linked (GlcNAc...) asparagine) is linked at Asn-53. A helical transmembrane segment spans residues 62–80; sequence NSLIGMGVLSCVFNSLAGK. At 81-99 the chain is on the cytoplasmic side; that stretch reads ICYDALDPSKYAKWKPWLK. The chain crosses the membrane as a helical span at residues 100 to 123; it reads SYLVVCVLFNIVLFLVALCCFLMR. At 124–264 the chain is on the lumenal side; that stretch reads GSLESTLAQG…LSYYGSLMNS (141 aa). Asn-229 is a glycosylation site (N-linked (GlcNAc...) asparagine). Residues 265–290 traverse the membrane as a helical segment; the sequence is MGAVTLLVWLFEVSITIGLRYLHTAL. Residues 291 to 346 lie on the Cytoplasmic side of the membrane; sequence EGVSNPEDLECESEGWLLEKSVSETWKAFLESLKKLGKSNQVEAEGADAGQAPEAG. An interaction with MREG region spans residues 341–346; the sequence is QAPEAG.

This sequence belongs to the PRPH2/ROM1 family. As to quaternary structure, homodimer; disulfide-linked. Forms a homotetramer. Forms a heterotetramer with ROM1. Homotetramer and heterotetramer core complexes go on to form higher order complexes by formation of intermolecular disulfide bonds. Interacts with MREG. Interacts with STX3. Interacts with SNAP25. As to expression, retina (photoreceptor). In rim region of ROS (rod outer segment) disks.

The protein localises to the membrane. It is found in the cell projection. It localises to the cilium. The protein resides in the photoreceptor outer segment. Its subcellular location is the photoreceptor inner segment. In terms of biological role, essential for retina photoreceptor outer segment disk morphogenesis, may also play a role with ROM1 in the maintenance of outer segment disk structure. Required for the maintenance of retinal outer nuclear layer thickness. Required for the correct development and organization of the photoreceptor inner segment. The sequence is that of Peripherin-2 (PRPH2) from Felis catus (Cat).